A 105-amino-acid polypeptide reads, in one-letter code: Large ribosomal subunit protein uL24 (105 aa).

It belongs to the universal ribosomal protein uL24 family. In terms of assembly, part of the 50S ribosomal subunit.

One of two assembly initiator proteins, it binds directly to the 5'-end of the 23S rRNA, where it nucleates assembly of the 50S subunit. Its function is as follows. One of the proteins that surrounds the polypeptide exit tunnel on the outside of the subunit. The sequence is that of Large ribosomal subunit protein uL24 from Clostridium botulinum (strain Langeland / NCTC 10281 / Type F).